The sequence spans 152 residues: Transcriptional regulator MraZ (152 aa).

SpoVT-AbrB domains follow at residues 5–52 (ASAV…PLNQ) and 81–124 (ATEC…SESE).

The protein belongs to the MraZ family. In terms of assembly, forms oligomers.

The protein resides in the cytoplasm. It is found in the nucleoid. The protein is Transcriptional regulator MraZ of Histophilus somni (strain 2336) (Haemophilus somnus).